We begin with the raw amino-acid sequence, 188 residues long: Elongation factor P (188 aa).

This sequence belongs to the elongation factor P family.

It localises to the cytoplasm. The protein operates within protein biosynthesis; polypeptide chain elongation. Functionally, involved in peptide bond synthesis. Stimulates efficient translation and peptide-bond synthesis on native or reconstituted 70S ribosomes in vitro. Probably functions indirectly by altering the affinity of the ribosome for aminoacyl-tRNA, thus increasing their reactivity as acceptors for peptidyl transferase. This Flavobacterium johnsoniae (strain ATCC 17061 / DSM 2064 / JCM 8514 / BCRC 14874 / CCUG 350202 / NBRC 14942 / NCIMB 11054 / UW101) (Cytophaga johnsonae) protein is Elongation factor P.